The following is a 573-amino-acid chain: Urease subunit alpha 2 (573 aa).

Residues 135–573 (GGMDTHVHYI…ISLNQLYFFS (439 aa)) enclose the Urease domain. Ni(2+)-binding residues include H140, H142, and K223. K223 is modified (N6-carboxylysine). H225 provides a ligand contact to substrate. Ni(2+) is bound by residues H252 and H278. The active-site Proton donor is the H326. D366 contacts Ni(2+).

The protein belongs to the metallo-dependent hydrolases superfamily. Urease alpha subunit family. In terms of assembly, heterotrimer of UreA (gamma), UreB (beta) and UreC (alpha) subunits. Three heterotrimers associate to form the active enzyme. It depends on Ni cation as a cofactor. Post-translationally, carboxylation allows a single lysine to coordinate two nickel ions.

It is found in the cytoplasm. It carries out the reaction urea + 2 H2O + H(+) = hydrogencarbonate + 2 NH4(+). It functions in the pathway nitrogen metabolism; urea degradation; CO(2) and NH(3) from urea (urease route): step 1/1. In terms of biological role, disrupting the ure2 operon has no effect on urease activity, or pathogen survival in BALB/c mice when inoculated by gavage, but confers slightly enhanced resistance to low pH killing in vitro. The polypeptide is Urease subunit alpha 2 (Brucella suis biovar 1 (strain 1330)).